The chain runs to 422 residues: 3-isopropylmalate dehydratase large subunit (422 aa).

The [4Fe-4S] cluster site is built by Cys294, Cys354, and Cys357.

This sequence belongs to the aconitase/IPM isomerase family. LeuC type 2 subfamily. As to quaternary structure, heterodimer of LeuC and LeuD. The cofactor is [4Fe-4S] cluster.

The catalysed reaction is (2R,3S)-3-isopropylmalate = (2S)-2-isopropylmalate. It functions in the pathway amino-acid biosynthesis; L-leucine biosynthesis; L-leucine from 3-methyl-2-oxobutanoate: step 2/4. Functionally, catalyzes the isomerization between 2-isopropylmalate and 3-isopropylmalate, via the formation of 2-isopropylmaleate. In Mycolicibacterium smegmatis (strain ATCC 700084 / mc(2)155) (Mycobacterium smegmatis), this protein is 3-isopropylmalate dehydratase large subunit.